The following is a 69-amino-acid chain: DNA-directed RNA polymerase subunit omega (69 aa).

This sequence belongs to the RNA polymerase subunit omega family. In terms of assembly, the RNAP catalytic core consists of 2 alpha, 1 beta, 1 beta' and 1 omega subunit. When a sigma factor is associated with the core the holoenzyme is formed, which can initiate transcription.

The catalysed reaction is RNA(n) + a ribonucleoside 5'-triphosphate = RNA(n+1) + diphosphate. Promotes RNA polymerase assembly. Latches the N- and C-terminal regions of the beta' subunit thereby facilitating its interaction with the beta and alpha subunits. The polypeptide is DNA-directed RNA polymerase subunit omega (Carboxydothermus hydrogenoformans (strain ATCC BAA-161 / DSM 6008 / Z-2901)).